The primary structure comprises 182 residues: Probable RNA 2'-phosphotransferase (182 aa).

It belongs to the KptA/TPT1 family.

Removes the 2'-phosphate from RNA via an intermediate in which the phosphate is ADP-ribosylated by NAD followed by a presumed transesterification to release the RNA and generate ADP-ribose 1''-2''-cyclic phosphate (APPR&gt;P). May function as an ADP-ribosylase. This chain is Probable RNA 2'-phosphotransferase, found in Herpetosiphon aurantiacus (strain ATCC 23779 / DSM 785 / 114-95).